The primary structure comprises 242 residues: E3 ubiquitin-protein ligase AIRP2 (242 aa).

Residues 146–184 (CGICLEIRNKVVLPTCNHSMCINCYRNWRARSQSCPFCR) form an RING-type zinc finger.

As to quaternary structure, interacts with ATP1/SDIRIP1. As to expression, expressed in germinating seeds, flower organs and siliques.

Its subcellular location is the cytoplasm. It is found in the cytosol. It catalyses the reaction S-ubiquitinyl-[E2 ubiquitin-conjugating enzyme]-L-cysteine + [acceptor protein]-L-lysine = [E2 ubiquitin-conjugating enzyme]-L-cysteine + N(6)-ubiquitinyl-[acceptor protein]-L-lysine.. In terms of biological role, possesses E3 ubiquitin-protein ligase activity in vitro when associated with the E2 enzyme UBC8 in vitro. Plays combinatory roles with AIRP1 in the positive regulation of the abscisic acid-mediated drought stress response. Plays a positive role in abscisic acid- and high salinity-regulated seed germination through the ubiquitin-proteasome-dependent down-regulation of ATP1/SDIRIP1. The sequence is that of E3 ubiquitin-protein ligase AIRP2 from Arabidopsis thaliana (Mouse-ear cress).